Reading from the N-terminus, the 456-residue chain is Phosphomethylpyrimidine synthase (456 aa).

Substrate-binding positions include N80, M109, Y139, H175, 195–197, 236–239, and E275; these read SRG and DSLR. H279 provides a ligand contact to Zn(2+). Residue Y302 participates in substrate binding. Position 343 (H343) interacts with Zn(2+). [4Fe-4S] cluster is bound by residues C423, C426, and C431.

Belongs to the ThiC family. [4Fe-4S] cluster serves as cofactor.

It catalyses the reaction 5-amino-1-(5-phospho-beta-D-ribosyl)imidazole + S-adenosyl-L-methionine = 4-amino-2-methyl-5-(phosphooxymethyl)pyrimidine + CO + 5'-deoxyadenosine + formate + L-methionine + 3 H(+). It participates in cofactor biosynthesis; thiamine diphosphate biosynthesis. Functionally, catalyzes the synthesis of the hydroxymethylpyrimidine phosphate (HMP-P) moiety of thiamine from aminoimidazole ribotide (AIR) in a radical S-adenosyl-L-methionine (SAM)-dependent reaction. The polypeptide is Phosphomethylpyrimidine synthase (Synechococcus elongatus (strain ATCC 33912 / PCC 7942 / FACHB-805) (Anacystis nidulans R2)).